The chain runs to 475 residues: tRNA-2-methylthio-N(6)-dimethylallyladenosine synthase (475 aa).

The interval 1–21 (MTTAPTSPALPASSDTAPTGP) is disordered. The MTTase N-terminal domain occupies 24–145 (RGLHVITWGC…LPEMVARAAR (122 aa)). [4Fe-4S] cluster is bound by residues Cys-33, Cys-69, Cys-108, Cys-186, Cys-190, and Cys-193. The region spanning 172–404 (TQGNLTAFLT…QALLREQQDA (233 aa)) is the Radical SAM core domain. The 63-residue stretch at 407-469 (ADMVGTVQEI…TNSLGGTLIR (63 aa)) folds into the TRAM domain.

The protein belongs to the methylthiotransferase family. MiaB subfamily. In terms of assembly, monomer. It depends on [4Fe-4S] cluster as a cofactor.

Its subcellular location is the cytoplasm. The enzyme catalyses N(6)-dimethylallyladenosine(37) in tRNA + (sulfur carrier)-SH + AH2 + 2 S-adenosyl-L-methionine = 2-methylsulfanyl-N(6)-dimethylallyladenosine(37) in tRNA + (sulfur carrier)-H + 5'-deoxyadenosine + L-methionine + A + S-adenosyl-L-homocysteine + 2 H(+). In terms of biological role, catalyzes the methylthiolation of N6-(dimethylallyl)adenosine (i(6)A), leading to the formation of 2-methylthio-N6-(dimethylallyl)adenosine (ms(2)i(6)A) at position 37 in tRNAs that read codons beginning with uridine. The polypeptide is tRNA-2-methylthio-N(6)-dimethylallyladenosine synthase (Gluconobacter oxydans (strain 621H) (Gluconobacter suboxydans)).